The sequence spans 142 residues: Large ribosomal subunit protein uL16 (142 aa).

This sequence belongs to the universal ribosomal protein uL16 family. In terms of assembly, part of the 50S ribosomal subunit.

In terms of biological role, binds 23S rRNA and is also seen to make contacts with the A and possibly P site tRNAs. The chain is Large ribosomal subunit protein uL16 from Mycoplasmopsis pulmonis (strain UAB CTIP) (Mycoplasma pulmonis).